The following is a 184-amino-acid chain: Der GTPase-activating protein YihI (184 aa).

A disordered region spans residues 1 to 107 (MNRPVKGAAD…VVAAKPTMSP (107 aa)). The segment covering 21-32 (TREELEREARER) has biased composition (basic and acidic residues). A compositionally biased stretch (low complexity) spans 80-95 (SAVAKPKPKSKPSAPV).

The protein belongs to the YihI family. As to quaternary structure, interacts with Der.

In terms of biological role, a GTPase-activating protein (GAP) that modifies Der/EngA GTPase function. May play a role in ribosome biogenesis. The chain is Der GTPase-activating protein YihI from Pectobacterium carotovorum subsp. carotovorum (strain PC1).